A 278-amino-acid chain; its full sequence is 4-hydroxy-tetrahydrodipicolinate reductase (278 aa).

NAD(+)-binding positions include 13–18 and 111–113; these read GAAGKM and GTT. The active-site Proton donor/acceptor is the His167. His168 provides a ligand contact to (S)-2,3,4,5-tetrahydrodipicolinate. Lys171 serves as the catalytic Proton donor. Position 177-178 (177-178) interacts with (S)-2,3,4,5-tetrahydrodipicolinate; sequence GT.

Belongs to the DapB family.

Its subcellular location is the cytoplasm. The enzyme catalyses (S)-2,3,4,5-tetrahydrodipicolinate + NAD(+) + H2O = (2S,4S)-4-hydroxy-2,3,4,5-tetrahydrodipicolinate + NADH + H(+). It catalyses the reaction (S)-2,3,4,5-tetrahydrodipicolinate + NADP(+) + H2O = (2S,4S)-4-hydroxy-2,3,4,5-tetrahydrodipicolinate + NADPH + H(+). The protein operates within amino-acid biosynthesis; L-lysine biosynthesis via DAP pathway; (S)-tetrahydrodipicolinate from L-aspartate: step 4/4. Its function is as follows. Catalyzes the conversion of 4-hydroxy-tetrahydrodipicolinate (HTPA) to tetrahydrodipicolinate. The polypeptide is 4-hydroxy-tetrahydrodipicolinate reductase (Nostoc sp. (strain PCC 7120 / SAG 25.82 / UTEX 2576)).